A 329-amino-acid polypeptide reads, in one-letter code: Segregation and condensation protein B (329 aa).

Disordered regions lie at residues 1-39 (MTTGSNGPQDETPEPGTPGGPGPFSEEEIAAVTGPGPAD), 252-274 (IVEKEDKPAPPAAGTVEALSDPA), and 286-329 (SEAA…PKPE).

The protein belongs to the ScpB family. In terms of assembly, homodimer. Homodimerization may be required to stabilize the binding of ScpA to the Smc head domains. Component of the Structural Maintenance of Chromosome (SMC) condensin-like complex composed of ScpA, ScpB and the Smc homodimer. ScpA and ScpB bind to the head domain of Smc, the presence of the three proteins is required for the association of the complex with DNA.

The protein resides in the cytoplasm. A conditionally essential component of the chromosome segregation machinery. Required for chromosome condensation and partitioning. Important for positioning and anchoring of ParB-parS complexes (ori of replication) in the subpolar region, and of the ter replication site, as well as for segration of the ParB-parS complex and thus chromosome segregation. Probably acts via the formation of a condensin-like complex containing Smc, ScpA and ScpB that pulls DNA away from mid-cell into both cell halves. The chain is Segregation and condensation protein B from Myxococcus xanthus (strain DK1622).